The following is a 627-amino-acid chain: Serine/threonine-protein kinase Nek5 (627 aa).

Positions 4–255 constitute a Protein kinase domain; the sequence is FHLIKIIGEG…VTSLLKRPFL (252 aa). ATP contacts are provided by residues 10–18 and Lys-33; that span reads IGEGTFGKV. Asp-124 serves as the catalytic Proton acceptor. Positions 563–580 are enriched in acidic residues; it reads QLEPGSDEDDIKFEESED. Disordered regions lie at residues 563-582 and 591-627; these read QLEPGSDEDDIKFEESEDEL and EKLAASTEEAEQAPSSSKNAEEPGEKEKTNLPVKKLQ. The segment covering 609–619 has biased composition (basic and acidic residues); the sequence is NAEEPGEKEKT.

This sequence belongs to the protein kinase superfamily. NEK Ser/Thr protein kinase family. NIMA subfamily. The cofactor is Mg(2+).

The protein resides in the cell projection. The protein localises to the cilium. It localises to the flagellum. It catalyses the reaction L-seryl-[protein] + ATP = O-phospho-L-seryl-[protein] + ADP + H(+). The catalysed reaction is L-threonyl-[protein] + ATP = O-phospho-L-threonyl-[protein] + ADP + H(+). The sequence is that of Serine/threonine-protein kinase Nek5 (Nek5) from Mus musculus (Mouse).